The chain runs to 210 residues: Probable nicotinate-nucleotide adenylyltransferase (210 aa).

Belongs to the NadD family.

It carries out the reaction nicotinate beta-D-ribonucleotide + ATP + H(+) = deamido-NAD(+) + diphosphate. It functions in the pathway cofactor biosynthesis; NAD(+) biosynthesis; deamido-NAD(+) from nicotinate D-ribonucleotide: step 1/1. Functionally, catalyzes the reversible adenylation of nicotinate mononucleotide (NaMN) to nicotinic acid adenine dinucleotide (NaAD). This Streptococcus pyogenes serotype M3 (strain ATCC BAA-595 / MGAS315) protein is Probable nicotinate-nucleotide adenylyltransferase.